The sequence spans 164 residues: Lipoprotein signal peptidase (164 aa).

Helical transmembrane passes span 12–32, 70–90, and 102–122; these read WLWL…LILQ, WFFA…MYRS, and ALII…GFVV. Active-site residues include Asp-123 and Asp-141. The helical transmembrane segment at 137–157 threads the bilayer; it reads FNLADTAICVGAALIVLEGFL.

Belongs to the peptidase A8 family.

It localises to the cell inner membrane. The catalysed reaction is Release of signal peptides from bacterial membrane prolipoproteins. Hydrolyzes -Xaa-Yaa-Zaa-|-(S,diacylglyceryl)Cys-, in which Xaa is hydrophobic (preferably Leu), and Yaa (Ala or Ser) and Zaa (Gly or Ala) have small, neutral side chains.. The protein operates within protein modification; lipoprotein biosynthesis (signal peptide cleavage). This protein specifically catalyzes the removal of signal peptides from prolipoproteins. The polypeptide is Lipoprotein signal peptidase (Escherichia coli O9:H4 (strain HS)).